A 437-amino-acid polypeptide reads, in one-letter code: Protein PhoH2 (437 aa).

The PINc domain occupies 7-134 (RTYVLDTSVL…LVSKDIPLRV (128 aa)).

In the N-terminal section; belongs to the PINc/VapC protein family. It in the C-terminal section; belongs to the PhoH family. In terms of assembly, interacts with antitoxin PhoAT. It depends on Mg(2+) as a cofactor.

The catalysed reaction is n ATP + n H2O + wound RNA = n ADP + n phosphate + unwound RNA.. The enzyme catalyses ATP + H2O = ADP + phosphate + H(+). It catalyses the reaction GTP + H2O = GDP + phosphate + H(+). Toxic component of a type II toxin-antitoxin (TA) system. The possible cognate antitoxin is PhoAT; the toxin gene can be expressed in the absence of the antitoxin gene in an endogenous mc(2)155 double deletion. Unwinds and/or cleaves 5'-tailed RNA in vitro that starts with 5'-AC, the reaction requires hydrolyzable ATP; double-stranded (ds)RNA and dsDNA are not unwound or cleaved. Has ATPase and GTPase activities. The protein is Protein PhoH2 of Mycolicibacterium smegmatis (strain ATCC 700084 / mc(2)155) (Mycobacterium smegmatis).